A 392-amino-acid polypeptide reads, in one-letter code: NADH-quinone oxidoreductase subunit D (392 aa).

It belongs to the complex I 49 kDa subunit family. In terms of assembly, NDH-1 is composed of 14 different subunits. Subunits NuoB, C, D, E, F, and G constitute the peripheral sector of the complex.

Its subcellular location is the cell inner membrane. It catalyses the reaction a quinone + NADH + 5 H(+)(in) = a quinol + NAD(+) + 4 H(+)(out). NDH-1 shuttles electrons from NADH, via FMN and iron-sulfur (Fe-S) centers, to quinones in the respiratory chain. The immediate electron acceptor for the enzyme in this species is believed to be ubiquinone. Couples the redox reaction to proton translocation (for every two electrons transferred, four hydrogen ions are translocated across the cytoplasmic membrane), and thus conserves the redox energy in a proton gradient. The polypeptide is NADH-quinone oxidoreductase subunit D (Rhodospirillum rubrum (strain ATCC 11170 / ATH 1.1.1 / DSM 467 / LMG 4362 / NCIMB 8255 / S1)).